The following is a 298-amino-acid chain: Elongation factor Ts (298 aa).

Residues 80 to 83 (TDFV) are involved in Mg(2+) ion dislocation from EF-Tu.

The protein belongs to the EF-Ts family.

It localises to the cytoplasm. In terms of biological role, associates with the EF-Tu.GDP complex and induces the exchange of GDP to GTP. It remains bound to the aminoacyl-tRNA.EF-Tu.GTP complex up to the GTP hydrolysis stage on the ribosome. In Acidovorax sp. (strain JS42), this protein is Elongation factor Ts.